A 904-amino-acid polypeptide reads, in one-letter code: Protein translocase subunit SecA (904 aa).

Residues Gln-87, 105 to 109 (GEGKT), and Asp-507 contribute to the ATP site. Positions 865-887 (GEGAEAAGQQPADAGPKIGRNDP) are disordered. Residues 868–880 (AEAAGQQPADAGP) are compositionally biased toward low complexity. Residues Cys-888, Cys-890, Cys-899, and His-900 each coordinate Zn(2+).

This sequence belongs to the SecA family. In terms of assembly, monomer and homodimer. Part of the essential Sec protein translocation apparatus which comprises SecA, SecYEG and auxiliary proteins SecDF-YajC and YidC. Requires Zn(2+) as cofactor.

It localises to the cell inner membrane. The protein resides in the cytoplasm. The enzyme catalyses ATP + H2O + cellular proteinSide 1 = ADP + phosphate + cellular proteinSide 2.. Functionally, part of the Sec protein translocase complex. Interacts with the SecYEG preprotein conducting channel. Has a central role in coupling the hydrolysis of ATP to the transfer of proteins into and across the cell membrane, serving both as a receptor for the preprotein-SecB complex and as an ATP-driven molecular motor driving the stepwise translocation of polypeptide chains across the membrane. This is Protein translocase subunit SecA from Dechloromonas aromatica (strain RCB).